We begin with the raw amino-acid sequence, 443 residues long: ATP-dependent protease ATPase subunit HslU (443 aa).

Residues Ile-18, 60–65, Asp-256, Glu-321, and Arg-393 each bind ATP; that span reads GVGKTE.

This sequence belongs to the ClpX chaperone family. HslU subfamily. As to quaternary structure, a double ring-shaped homohexamer of HslV is capped on each side by a ring-shaped HslU homohexamer. The assembly of the HslU/HslV complex is dependent on binding of ATP.

It is found in the cytoplasm. In terms of biological role, ATPase subunit of a proteasome-like degradation complex; this subunit has chaperone activity. The binding of ATP and its subsequent hydrolysis by HslU are essential for unfolding of protein substrates subsequently hydrolyzed by HslV. HslU recognizes the N-terminal part of its protein substrates and unfolds these before they are guided to HslV for hydrolysis. This is ATP-dependent protease ATPase subunit HslU from Photorhabdus laumondii subsp. laumondii (strain DSM 15139 / CIP 105565 / TT01) (Photorhabdus luminescens subsp. laumondii).